Here is a 160-residue protein sequence, read N- to C-terminus: Succinate dehydrogenase assembly factor 2-A, mitochondrial (160 aa).

A mitochondrion-targeting transit peptide spans 1-30 (MLRQLKLTLNISRWIFMPWQRQASASSSQV).

It belongs to the SDHAF2 family. As to quaternary structure, interacts with the flavoprotein subunit within the SDH catalytic dimer.

The protein resides in the mitochondrion matrix. Its function is as follows. Plays an essential role in the assembly of succinate dehydrogenase (SDH), an enzyme complex (also referred to as respiratory complex II) that is a component of both the tricarboxylic acid (TCA) cycle and the mitochondrial electron transport chain, and which couples the oxidation of succinate to fumarate with the reduction of ubiquinone (coenzyme Q) to ubiquinol. Required for flavinylation (covalent attachment of FAD) of the flavoprotein subunit of the SDH catalytic dimer. This chain is Succinate dehydrogenase assembly factor 2-A, mitochondrial, found in Drosophila persimilis (Fruit fly).